Reading from the N-terminus, the 146-residue chain is MSAQTDQPITEQQKKEQEQYTNLINSLPTRWEIELEFVQSLSNIPYVNYLAQNNYFNDENFINYLNYLQYWTQPEYSKFLVYPNCLHILKLLQDENFRKNIINQDFMNSLMNDMVKRWQSNANDQDENKEKEENKEVPEVRINGTN.

Positions 121 to 146 are disordered; that stretch reads NANDQDENKEKEENKEVPEVRINGTN. Positions 126-139 are enriched in basic and acidic residues; sequence DENKEKEENKEVPE.

This sequence belongs to the Mediator complex subunit 31 family. Component of the Mediator complex.

The protein resides in the nucleus. In terms of biological role, component of the Mediator complex, a coactivator involved in the regulated transcription of nearly all RNA polymerase II-dependent genes. Mediator functions as a bridge to convey information from gene-specific regulatory proteins to the basal RNA polymerase II transcription machinery. Mediator is recruited to promoters by direct interactions with regulatory proteins and serves as a scaffold for the assembly of a functional preinitiation complex with RNA polymerase II and the general transcription factors. In Candida albicans (strain SC5314 / ATCC MYA-2876) (Yeast), this protein is Mediator of RNA polymerase II transcription subunit 31 (SOH1).